The following is a 140-amino-acid chain: Large ribosomal subunit protein uL14 (140 aa).

At Ser-17 the chain carries Phosphoserine. Position 38 is a phosphotyrosine (Tyr-38).

This sequence belongs to the universal ribosomal protein uL14 family. In terms of assembly, component of the large ribosomal subunit.

It localises to the cytoplasm. Functionally, component of the large ribosomal subunit. The ribosome is a large ribonucleoprotein complex responsible for the synthesis of proteins in the cell. This chain is Large ribosomal subunit protein uL14 (RPL23), found in Pongo abelii (Sumatran orangutan).